An 86-amino-acid chain; its full sequence is MIRMDTVTDLSLREIGVAATKVLGRAVEVRAESHIGRDLAVDSLALMNIIMELEDTFDISIPLDRLASVETAGDLSKLINDLRTRA.

One can recognise a Carrier domain in the interval 6 to 83 (TVTDLSLREI…DLSKLINDLR (78 aa)). Ser-43 carries the post-translational modification O-(pantetheine 4'-phosphoryl)serine.

The protein belongs to the acyl carrier protein (ACP) family.

The protein operates within lipid metabolism; sphingolipid metabolism. Involved in de novo bacterial ceramide synthesis. The sequence is that of Probable acyl carrier protein CCNA_01221 from Caulobacter vibrioides (strain NA1000 / CB15N) (Caulobacter crescentus).